Reading from the N-terminus, the 704-residue chain is CSIAVGMIIEIIVMYPIQHRKYRPGIDNLLVLLIGGIPIAMPTVLSVTMAIGSHRLAQQGAITKRMTAIEEMAGMDVLCSDKTGTLTLNKLTVDKNLVEVFAKGVDADTVVLMAARASRTENQDAIDTAIVGMLADPKEARAGIREIHFLPFNPTDKRTALTYLDGEGKMHRVSKGAPEQILNLAHNKSDIERRVHTVIDKFAERGLRSLGVAYQEVPEGRKESSGGPWQFIGLLPLFDPPRHDSAETIRRALNLGVNVKMITGDQLAIGKETGRRLGMGTNMYPSSALLGQTKDESIASLPIDELIEKADGFAGVFPEHKYEIVKRLQARKHICGMTGDGVNDAPALKKADIGIAVDDATDAARSASDIVLTEPGLSVIISAVLTSRAIFQRMKNYTIYAVSITIRIVLGFMLLALIWKFDFPPFMVLIIAILNDGTIMTISKDRVKPSPLPDSWKLAEIFTTGVVLGGYLAMMTVIFFWAAYETQFFPRVFGVSTLQRTATDDFRKLASAIYLQVSTISQALIFVTRSRSWSFVERPGLLLVVALIVAQLVATLIAVYASWSFAAIEGIGWGWAGVIWLYNLVFYFPLDIIKFLIRYALSGRAWDLVLEQRIAFTRKKDFGKEQRELQWAHAQRTLHGLQVPDIKLFSEATNFNELNQLAEEAKRRAEIARQRELHTLKGHVESVVKLKGLDIETIQQSYTV.

A helical transmembrane segment spans residues 1–16 (CSIAVGMIIEIIVMYP). Residues 17 to 26 (IQHRKYRPGI) lie on the Extracellular side of the membrane. A helical transmembrane segment spans residues 27–48 (DNLLVLLIGGIPIAMPTVLSVT). The Cytoplasmic portion of the chain corresponds to 49–395 (MAIGSHRLAQ…TSRAIFQRMK (347 aa)). Asp-81 (4-aspartylphosphate intermediate) is an active-site residue. Positions 340 and 344 each coordinate Mg(2+). The chain crosses the membrane as a helical span at residues 396-417 (NYTIYAVSITIRIVLGFMLLAL). Topologically, residues 418 to 422 (IWKFD) are extracellular. A helical membrane pass occupies residues 423–445 (FPPFMVLIIAILNDGTIMTISKD). The Cytoplasmic segment spans residues 446 to 461 (RVKPSPLPDSWKLAEI). The helical transmembrane segment at 462 to 482 (FTTGVVLGGYLAMMTVIFFWA) threads the bilayer. Residues 483-507 (AYETQFFPRVFGVSTLQRTATDDFR) lie on the Extracellular side of the membrane. Residues 508–528 (KLASAIYLQVSTISQALIFVT) traverse the membrane as a helical segment. Over 529–540 (RSRSWSFVERPG) the chain is Cytoplasmic. Residues 541–561 (LLLVVALIVAQLVATLIAVYA) traverse the membrane as a helical segment. The Extracellular segment spans residues 562 to 570 (SWSFAAIEG). Residues 571–591 (IGWGWAGVIWLYNLVFYFPLD) traverse the membrane as a helical segment. At 592–704 (IIKFLIRYAL…IETIQQSYTV (113 aa)) the chain is on the cytoplasmic side.

The protein belongs to the cation transport ATPase (P-type) (TC 3.A.3) family. Type IIIA subfamily. Possibly exists as a homodimer or a homotrimer.

It localises to the cell membrane. It catalyses the reaction ATP + H2O + H(+)(in) = ADP + phosphate + 2 H(+)(out). In terms of biological role, the plasma membrane ATPase of plants and fungi is a hydrogen ion pump. The proton gradient it generates drives the active transport of nutrients by H(+)-symport. The resulting external acidification and/or internal alkinization may mediate growth responses. The sequence is that of Plasma membrane ATPase 2 (LHA2) from Solanum lycopersicum (Tomato).